A 212-amino-acid polypeptide reads, in one-letter code: Ribonuclease HII (212 aa).

The RNase H type-2 domain occupies 28 to 212 (SIIAGVDEVG…KSFAPIRQVV (185 aa)). Residues Asp34, Glu35, and Asp127 each coordinate a divalent metal cation.

It belongs to the RNase HII family. Mn(2+) serves as cofactor. It depends on Mg(2+) as a cofactor.

It is found in the cytoplasm. The enzyme catalyses Endonucleolytic cleavage to 5'-phosphomonoester.. In terms of biological role, endonuclease that specifically degrades the RNA of RNA-DNA hybrids. This is Ribonuclease HII from Chlamydia caviae (strain ATCC VR-813 / DSM 19441 / 03DC25 / GPIC) (Chlamydophila caviae).